We begin with the raw amino-acid sequence, 375 residues long: o-succinylbenzoate synthase (375 aa).

Residue K166 is the Proton donor of the active site. The Mg(2+) site is built by D191, E216, and D241. The Proton acceptor role is filled by K265.

The protein belongs to the mandelate racemase/muconate lactonizing enzyme family. MenC type 2 subfamily. As to quaternary structure, homotetramer. A divalent metal cation serves as cofactor.

The enzyme catalyses (1R,6R)-6-hydroxy-2-succinyl-cyclohexa-2,4-diene-1-carboxylate = 2-succinylbenzoate + H2O. It carries out the reaction N-acetyl-D-methionine = N-acetyl-L-methionine. It catalyses the reaction N-acetyl-D-phenylalanine = N-acetyl-L-phenylalanine. Its pathway is quinol/quinone metabolism; 1,4-dihydroxy-2-naphthoate biosynthesis; 1,4-dihydroxy-2-naphthoate from chorismate: step 4/7. It functions in the pathway quinol/quinone metabolism; menaquinone biosynthesis. Converts 2-succinyl-6-hydroxy-2,4-cyclohexadiene-1-carboxylate (SHCHC) to 2-succinylbenzoate (OSB). Also acts as a N-succinylamino acid racemase (NSAR) that catalyzes the racemization of various N-succinylamino acids, including N-succinyl-alanine and N-succinyl-phenylalanine. Can catalyze the racemization of a broad range of N-acylamino acids, including N-acetyl-methionine, N-acetyl-phenylalanine, N-carbamoyl-methionine, N-formyl-D-methionine, N-formyl-D-norleucine and N-carbamoyl-D-norleucine. May be a bifunctional enzyme involved in menaquinone biosynthesis and in an irreversible pathway for the conversion of D- to L-amino acids, thereby facilitating the survival and/or growth of the organism. This Geobacillus kaustophilus protein is o-succinylbenzoate synthase.